The sequence spans 154 residues: 6,7-dimethyl-8-ribityllumazine synthase (154 aa).

Residues F22, 56–58 (AFE), and 80–82 (AVI) contribute to the 5-amino-6-(D-ribitylamino)uracil site. 85-86 (ET) contacts (2S)-2-hydroxy-3-oxobutyl phosphate. H88 (proton donor) is an active-site residue. Residue F113 participates in 5-amino-6-(D-ribitylamino)uracil binding. R127 serves as a coordination point for (2S)-2-hydroxy-3-oxobutyl phosphate.

Belongs to the DMRL synthase family.

It carries out the reaction (2S)-2-hydroxy-3-oxobutyl phosphate + 5-amino-6-(D-ribitylamino)uracil = 6,7-dimethyl-8-(1-D-ribityl)lumazine + phosphate + 2 H2O + H(+). Its pathway is cofactor biosynthesis; riboflavin biosynthesis; riboflavin from 2-hydroxy-3-oxobutyl phosphate and 5-amino-6-(D-ribitylamino)uracil: step 1/2. Functionally, catalyzes the formation of 6,7-dimethyl-8-ribityllumazine by condensation of 5-amino-6-(D-ribitylamino)uracil with 3,4-dihydroxy-2-butanone 4-phosphate. This is the penultimate step in the biosynthesis of riboflavin. The chain is 6,7-dimethyl-8-ribityllumazine synthase from Thermoanaerobacter pseudethanolicus (strain ATCC 33223 / 39E) (Clostridium thermohydrosulfuricum).